We begin with the raw amino-acid sequence, 461 residues long: V-type ATP synthase beta chain (461 aa).

The protein belongs to the ATPase alpha/beta chains family.

Produces ATP from ADP in the presence of a proton gradient across the membrane. The V-type beta chain is a regulatory subunit. The polypeptide is V-type ATP synthase beta chain (Streptococcus pneumoniae (strain CGSP14)).